Here is a 349-residue protein sequence, read N- to C-terminus: Probable esterase Cgl0839 (349 aa).

The region spanning 60–329 (GTHQTWFQQY…EDIAGHLGLF (270 aa)) is the AB hydrolase-1 domain. The active-site Nucleophile is serine 142. Active-site residues include aspartate 296 and histidine 325.

The protein belongs to the AB hydrolase superfamily. Acetyl esterase family. In terms of assembly, homodimer.

Esterase that catalyzes the hydrolysis of 4-nitrophenyl acetate in vitro. This Corynebacterium glutamicum (strain ATCC 13032 / DSM 20300 / JCM 1318 / BCRC 11384 / CCUG 27702 / LMG 3730 / NBRC 12168 / NCIMB 10025 / NRRL B-2784 / 534) protein is Probable esterase Cgl0839.